The sequence spans 207 residues: Guanylate kinase (207 aa).

One can recognise a Guanylate kinase-like domain in the interval 4–184 (GTLYIVSAPS…ALSDLKTIIR (181 aa)). Residue 11–18 (APSGAGKS) coordinates ATP.

This sequence belongs to the guanylate kinase family.

It is found in the cytoplasm. It catalyses the reaction GMP + ATP = GDP + ADP. The enzyme catalyses dZMP + ATP = dZDP + ADP. It functions in the pathway purine metabolism. In terms of biological role, essential for recycling GMP and indirectly, cGMP. Functionally, (Microbial infection) Catalyzes the phosphorylation of dZMP to dZDP, when the bacterium is infected by a phage that produces the substrate for the synthesis of dZTP (2- amino-2'-deoxyadenosine 5'-triphosphate), which is then used by the phage as a DNA polymerase substrate. The chain is Guanylate kinase from Salmonella choleraesuis (strain SC-B67).